The sequence spans 118 residues: Large ribosomal subunit protein bL19 (118 aa).

The protein belongs to the bacterial ribosomal protein bL19 family.

In terms of biological role, this protein is located at the 30S-50S ribosomal subunit interface and may play a role in the structure and function of the aminoacyl-tRNA binding site. This chain is Large ribosomal subunit protein bL19, found in Nautilia profundicola (strain ATCC BAA-1463 / DSM 18972 / AmH).